A 243-amino-acid chain; its full sequence is Carboxy-S-adenosyl-L-methionine synthase (243 aa).

S-adenosyl-L-methionine is bound by residues Tyr-40, 65 to 67, 90 to 91, 118 to 119, Asn-133, and Arg-200; these read GCS, DN, and DI.

Belongs to the class I-like SAM-binding methyltransferase superfamily. Cx-SAM synthase family. Homodimer.

It catalyses the reaction prephenate + S-adenosyl-L-methionine = carboxy-S-adenosyl-L-methionine + 3-phenylpyruvate + H2O. Catalyzes the conversion of S-adenosyl-L-methionine (SAM) to carboxy-S-adenosyl-L-methionine (Cx-SAM). This chain is Carboxy-S-adenosyl-L-methionine synthase, found in Shewanella baltica (strain OS155 / ATCC BAA-1091).